We begin with the raw amino-acid sequence, 238 residues long: tRNA (guanine-N(7)-)-methyltransferase (238 aa).

4 residues coordinate S-adenosyl-L-methionine: Glu70, Asp95, Asp122, and Asp145. Asp145 is an active-site residue. Residues Lys149, Asp181, and 216–219 (TKFE) contribute to the substrate site.

It belongs to the class I-like SAM-binding methyltransferase superfamily. TrmB family.

The enzyme catalyses guanosine(46) in tRNA + S-adenosyl-L-methionine = N(7)-methylguanosine(46) in tRNA + S-adenosyl-L-homocysteine. It functions in the pathway tRNA modification; N(7)-methylguanine-tRNA biosynthesis. In terms of biological role, catalyzes the formation of N(7)-methylguanine at position 46 (m7G46) in tRNA. The polypeptide is tRNA (guanine-N(7)-)-methyltransferase (Neisseria meningitidis serogroup A / serotype 4A (strain DSM 15465 / Z2491)).